The following is a 255-amino-acid chain: tRNA (guanine-N(7)-)-methyltransferase (255 aa).

Residues E64, E89, D116, and D138 each coordinate S-adenosyl-L-methionine. Residue D138 is part of the active site. Substrate-binding positions include K142, D174, and 212–215 (TRYE).

Belongs to the class I-like SAM-binding methyltransferase superfamily. TrmB family.

The enzyme catalyses guanosine(46) in tRNA + S-adenosyl-L-methionine = N(7)-methylguanosine(46) in tRNA + S-adenosyl-L-homocysteine. Its pathway is tRNA modification; N(7)-methylguanine-tRNA biosynthesis. Functionally, catalyzes the formation of N(7)-methylguanine at position 46 (m7G46) in tRNA. The polypeptide is tRNA (guanine-N(7)-)-methyltransferase (Rhodospirillum rubrum (strain ATCC 11170 / ATH 1.1.1 / DSM 467 / LMG 4362 / NCIMB 8255 / S1)).